The chain runs to 468 residues: ATP synthase subunit beta (468 aa).

Position 148–155 (148–155 (GGAGVGKT)) interacts with ATP.

This sequence belongs to the ATPase alpha/beta chains family. In terms of assembly, F-type ATPases have 2 components, CF(1) - the catalytic core - and CF(0) - the membrane proton channel. CF(1) has five subunits: alpha(3), beta(3), gamma(1), delta(1), epsilon(1). CF(0) has three main subunits: a(1), b(2) and c(9-12). The alpha and beta chains form an alternating ring which encloses part of the gamma chain. CF(1) is attached to CF(0) by a central stalk formed by the gamma and epsilon chains, while a peripheral stalk is formed by the delta and b chains.

It localises to the cell inner membrane. It catalyses the reaction ATP + H2O + 4 H(+)(in) = ADP + phosphate + 5 H(+)(out). Functionally, produces ATP from ADP in the presence of a proton gradient across the membrane. The catalytic sites are hosted primarily by the beta subunits. This Xanthomonas campestris pv. campestris (strain B100) protein is ATP synthase subunit beta.